The following is an 87-amino-acid chain: Large ribosomal subunit protein bL28 (87 aa).

It belongs to the bacterial ribosomal protein bL28 family.

This chain is Large ribosomal subunit protein bL28, found in Akkermansia muciniphila (strain ATCC BAA-835 / DSM 22959 / JCM 33894 / BCRC 81048 / CCUG 64013 / CIP 107961 / Muc).